The sequence spans 160 residues: Myosin catalytic light chain LC-1, mantle muscle (160 aa).

Xaa-1 carries the post-translational modification Blocked amino end (Xaa). 3 EF-hand domains span residues 7–44, 83–118, and 119–153; these read DEIE…LGMN, TAAD…LGER, and ITED…VMAG.

Functionally, in molluscan muscle, calcium regulation is associated with myosin rather than with actin. Muscle myosin contains two types of light chains: the catalytic light chain, essential for ATPase activity, and the regulatory light chain, a calcium-binding protein responsible for Ca(2+) dependent binding and Ca(2+) dependent Mg-ATPase activity. The sequence is that of Myosin catalytic light chain LC-1, mantle muscle from Todarodes pacificus (Japanese flying squid).